We begin with the raw amino-acid sequence, 267 residues long: 4-hydroxy-tetrahydrodipicolinate reductase (267 aa).

NAD(+)-binding positions include 8-13 and glutamate 34; that span reads GAGGRM. An NADP(+)-binding site is contributed by arginine 35. NAD(+)-binding positions include 98–100 and 122–125; these read GTT and APNM. Histidine 155 serves as the catalytic Proton donor/acceptor. Histidine 156 lines the (S)-2,3,4,5-tetrahydrodipicolinate pocket. The active-site Proton donor is lysine 159. 165–166 provides a ligand contact to (S)-2,3,4,5-tetrahydrodipicolinate; sequence GT.

This sequence belongs to the DapB family.

The protein localises to the cytoplasm. It carries out the reaction (S)-2,3,4,5-tetrahydrodipicolinate + NAD(+) + H2O = (2S,4S)-4-hydroxy-2,3,4,5-tetrahydrodipicolinate + NADH + H(+). The catalysed reaction is (S)-2,3,4,5-tetrahydrodipicolinate + NADP(+) + H2O = (2S,4S)-4-hydroxy-2,3,4,5-tetrahydrodipicolinate + NADPH + H(+). The protein operates within amino-acid biosynthesis; L-lysine biosynthesis via DAP pathway; (S)-tetrahydrodipicolinate from L-aspartate: step 4/4. Catalyzes the conversion of 4-hydroxy-tetrahydrodipicolinate (HTPA) to tetrahydrodipicolinate. In Thioalkalivibrio sulfidiphilus (strain HL-EbGR7), this protein is 4-hydroxy-tetrahydrodipicolinate reductase.